The primary structure comprises 84 residues: Large ribosomal subunit protein bL31B (84 aa).

Belongs to the bacterial ribosomal protein bL31 family. Type B subfamily. As to quaternary structure, part of the 50S ribosomal subunit.

This is Large ribosomal subunit protein bL31B from Staphylococcus aureus (strain Mu3 / ATCC 700698).